The primary structure comprises 122 residues: Large ribosomal subunit protein uL14 (122 aa).

It belongs to the universal ribosomal protein uL14 family. As to quaternary structure, part of the 50S ribosomal subunit. Forms a cluster with proteins L3 and L19. In the 70S ribosome, L14 and L19 interact and together make contacts with the 16S rRNA in bridges B5 and B8.

In terms of biological role, binds to 23S rRNA. Forms part of two intersubunit bridges in the 70S ribosome. This chain is Large ribosomal subunit protein uL14, found in Geobacillus thermodenitrificans (strain NG80-2).